The primary structure comprises 336 residues: uncharacterized protein (336 aa).

The segment covering 297-316 has biased composition (basic and acidic residues); sequence KKDLQKSEEEEHPNDDHVYM. The disordered stretch occupies residues 297-336; the sequence is KKDLQKSEEEEHPNDDHVYMTEEDDMEKIERGIESLGNGH.

This is an uncharacterized protein from Invertebrate iridescent virus 6 (IIV-6).